A 1381-amino-acid chain; its full sequence is DNA-directed RNA polymerase subunit beta'' (1381 aa).

The Zn(2+) site is built by Cys224, Cys295, Cys302, and Cys305.

The protein belongs to the RNA polymerase beta' chain family. RpoC2 subfamily. As to quaternary structure, in plastids the minimal PEP RNA polymerase catalytic core is composed of four subunits: alpha, beta, beta', and beta''. When a (nuclear-encoded) sigma factor is associated with the core the holoenzyme is formed, which can initiate transcription. Requires Zn(2+) as cofactor.

The protein resides in the plastid. Its subcellular location is the chloroplast. The catalysed reaction is RNA(n) + a ribonucleoside 5'-triphosphate = RNA(n+1) + diphosphate. DNA-dependent RNA polymerase catalyzes the transcription of DNA into RNA using the four ribonucleoside triphosphates as substrates. This Lactuca sativa (Garden lettuce) protein is DNA-directed RNA polymerase subunit beta''.